The chain runs to 246 residues: MLLIPAIDLKDGECVRLRQGLMDDATVFSGDIVAMAERWVNQGARRLHMVDLNGAFEGKPVNGDAVYQVREAFPDLPIQIGGGIRDLETIEAYLKAGVSYCIIGTKAVHNPEFVAEACKAFPGHIMVGLDAKEGMVAINGWAEVTDHNVIDLGKQFENDGVEAIIYTDIGRDGMMQGVNIQATQALAKALNIPIIASGGITNLDDIRALATIEKDGVSGAITGRAIYEGSLNFKEGQALSDELSKA.

Aspartate 8 serves as the catalytic Proton acceptor. The Proton donor role is filled by aspartate 130.

This sequence belongs to the HisA/HisF family.

It is found in the cytoplasm. It carries out the reaction 1-(5-phospho-beta-D-ribosyl)-5-[(5-phospho-beta-D-ribosylamino)methylideneamino]imidazole-4-carboxamide = 5-[(5-phospho-1-deoxy-D-ribulos-1-ylimino)methylamino]-1-(5-phospho-beta-D-ribosyl)imidazole-4-carboxamide. It participates in amino-acid biosynthesis; L-histidine biosynthesis; L-histidine from 5-phospho-alpha-D-ribose 1-diphosphate: step 4/9. This is 1-(5-phosphoribosyl)-5-[(5-phosphoribosylamino)methylideneamino] imidazole-4-carboxamide isomerase from Hydrogenovibrio crunogenus (strain DSM 25203 / XCL-2) (Thiomicrospira crunogena).